Consider the following 197-residue polypeptide: Holliday junction branch migration complex subunit RuvA (197 aa).

The segment at 1-63 (MYAYLKGIIT…EDAHLLYGFR (63 aa)) is domain I. The tract at residues 64-142 (SEDEKKLFLS…VAGDDLPAKI (79 aa)) is domain II. The tract at residues 143–147 (AVQAS) is flexible linker. The interval 148–197 (AENQELEEAMEAMLALGYKATELKKIKKFFEGTTDTAENYIKSALKMLVK) is domain III.

The protein belongs to the RuvA family. Homotetramer. Forms an RuvA(8)-RuvB(12)-Holliday junction (HJ) complex. HJ DNA is sandwiched between 2 RuvA tetramers; dsDNA enters through RuvA and exits via RuvB. An RuvB hexamer assembles on each DNA strand where it exits the tetramer. Each RuvB hexamer is contacted by two RuvA subunits (via domain III) on 2 adjacent RuvB subunits; this complex drives branch migration. In the full resolvosome a probable DNA-RuvA(4)-RuvB(12)-RuvC(2) complex forms which resolves the HJ.

Its subcellular location is the cytoplasm. Its function is as follows. The RuvA-RuvB-RuvC complex processes Holliday junction (HJ) DNA during genetic recombination and DNA repair, while the RuvA-RuvB complex plays an important role in the rescue of blocked DNA replication forks via replication fork reversal (RFR). RuvA specifically binds to HJ cruciform DNA, conferring on it an open structure. The RuvB hexamer acts as an ATP-dependent pump, pulling dsDNA into and through the RuvAB complex. HJ branch migration allows RuvC to scan DNA until it finds its consensus sequence, where it cleaves and resolves the cruciform DNA. This is Holliday junction branch migration complex subunit RuvA from Streptococcus pneumoniae (strain Taiwan19F-14).